Consider the following 227-residue polypeptide: Prolactin (227 aa).

An N-terminal signal peptide occupies residues 1–28; it reads MDSKWSRRTGSLLLLLVSNLLLCKSTAS. Residues Cys-32 and Cys-39 are joined by a disulfide bond. 3 positions are modified to phosphoserine: Ser-54, Ser-62, and Ser-118. 2 cysteine pairs are disulfide-bonded: Cys-86–Cys-202 and Cys-219–Cys-227.

It belongs to the somatotropin/prolactin family. In terms of assembly, interacts with PRLR.

Its subcellular location is the secreted. Prolactin acts primarily on the mammary gland by promoting lactation. This is Prolactin (PRL) from Oryctolagus cuniculus (Rabbit).